The chain runs to 198 residues: Snake venom metalloproteinase BpirMP (198 aa).

In terms of domain architecture, Peptidase M12B spans 1–197 (TYIEVAVVAD…HNPQCILNEP (197 aa)). Residues E4 and D88 each contribute to the Ca(2+) site. 3 disulfides stabilise this stretch: C112–C192, C152–C176, and C154–C159. H137 serves as a coordination point for Zn(2+). E138 is an active-site residue. Residues H141 and H147 each coordinate Zn(2+). Ca(2+)-binding residues include C192 and N195.

Belongs to the venom metalloproteinase (M12B) family. P-I subfamily. Monomer. Requires Zn(2+) as cofactor. As to expression, expressed by the venom gland.

The protein localises to the secreted. Inhibited by the chelating agents EDTA, EGTA and 1,10-phenanthroline. Is not inhibited by serine proteinase inhibitors aprotinin, leupeptin and benzamidine. Zinc metalloprotease that preferentially degrades Aalpha chain of fibrinogen (FGA) (at a dose of 5 ug, whereas at a dose of 10 ug, both FGA and FGB are completely degraded). Degrades fibrin gel in a dose-dependent manner, as well blood clots formed in vitro (thrombolytic activity). Induces hemorrhage (in the dorsal skin of mice), with an MHD of 50 ug. The basal membrane components collagen (all chains of type IV) (COL4A4), fibronectin (FN1), laminin and nidogen are all degraded by this toxin. This Bothrops pirajai (Piraja's lancehead) protein is Snake venom metalloproteinase BpirMP.